We begin with the raw amino-acid sequence, 134 residues long: Profilin-3 (134 aa).

Cysteines 13 and 118 form a disulfide. Residues 84–100 (AVIRGKKGSGGITIKKT) carry the Involved in PIP2 interaction motif. Thr114 is subject to Phosphothreonine.

It belongs to the profilin family. Occurs in many kinds of cells as a complex with monomeric actin in a 1:1 ratio. Phosphorylated by MAP kinases.

The protein localises to the cytoplasm. It localises to the cytoskeleton. Binds to actin and affects the structure of the cytoskeleton. At high concentrations, profilin prevents the polymerization of actin, whereas it enhances it at low concentrations. This is Profilin-3 from Olea europaea (Common olive).